Consider the following 115-residue polypeptide: NADH-ubiquinone oxidoreductase chain 3 (115 aa).

3 helical membrane-spanning segments follow: residues 3 to 23 (IMLT…IAFW), 55 to 75 (FFLV…LLPL), and 86 to 106 (TMLT…AYEW).

The protein belongs to the complex I subunit 3 family. In terms of assembly, core subunit of respiratory chain NADH dehydrogenase (Complex I) which is composed of 45 different subunits. Interacts with TMEM186. Interacts with TMEM242.

It localises to the mitochondrion inner membrane. It catalyses the reaction a ubiquinone + NADH + 5 H(+)(in) = a ubiquinol + NAD(+) + 4 H(+)(out). Its function is as follows. Core subunit of the mitochondrial membrane respiratory chain NADH dehydrogenase (Complex I) which catalyzes electron transfer from NADH through the respiratory chain, using ubiquinone as an electron acceptor. Essential for the catalytic activity of complex I. In Sus scrofa (Pig), this protein is NADH-ubiquinone oxidoreductase chain 3.